Reading from the N-terminus, the 236-residue chain is Small ribosomal subunit protein uS5 (236 aa).

Residues 1–10 are compositionally biased toward basic and acidic residues; it reads MTENNEKDIQ. The interval 1–64 is disordered; the sequence is MTENNEKDIQ…GRDGGREAEK (64 aa). Positions 11–27 are enriched in low complexity; it reads VTEAVAAPATETAAPAT. Over residues 28-64 the composition is skewed to basic and acidic residues; it reads TDDRRGGARRGERGDRGQGRGDRGGRGGRDGGREAEK. In terms of domain architecture, S5 DRBM spans 67-130; that stretch reads FVERVVTINR…EEAKKSFFRV (64 aa).

The protein belongs to the universal ribosomal protein uS5 family. As to quaternary structure, part of the 30S ribosomal subunit. Contacts proteins S4 and S8.

Functionally, with S4 and S12 plays an important role in translational accuracy. Its function is as follows. Located at the back of the 30S subunit body where it stabilizes the conformation of the head with respect to the body. This Arthrobacter sp. (strain FB24) protein is Small ribosomal subunit protein uS5.